The sequence spans 525 residues: GMP synthase [glutamine-hydrolyzing] (525 aa).

Residues 9–207 (RILILDFGSQ…VRDICQCEAL (199 aa)) form the Glutamine amidotransferase type-1 domain. Cys-86 (nucleophile) is an active-site residue. Catalysis depends on residues His-181 and Glu-183. The region spanning 208–400 (WTPAKIIDDA…LGLPYDMLYR (193 aa)) is the GMPS ATP-PPase domain. Position 235–241 (235–241 (SGGVDSS)) interacts with ATP.

Homodimer.

It catalyses the reaction XMP + L-glutamine + ATP + H2O = GMP + L-glutamate + AMP + diphosphate + 2 H(+). The protein operates within purine metabolism; GMP biosynthesis; GMP from XMP (L-Gln route): step 1/1. Catalyzes the synthesis of GMP from XMP. The protein is GMP synthase [glutamine-hydrolyzing] of Escherichia coli O139:H28 (strain E24377A / ETEC).